The following is a 914-amino-acid chain: TRPM8 channel-associated factor 3 (914 aa).

Residues 533–832 form the Peptidase M60 domain; that stretch reads NSWVSTGLYL…TYLQLQEGFG (300 aa).

This sequence belongs to the TCAF family. As to expression, prostate-specific. Present in both dorso-lateral and anterior prostate.

May play a role in the regulation of the cation channel TRPM8 activity. This Mus musculus (Mouse) protein is TRPM8 channel-associated factor 3.